Reading from the N-terminus, the 154-residue chain is MTKTDVSGLSQLGTKVDLPQNPEEAVLERVPSGHGGTDFVVRFTAPEFTSLCPMTGQPDFAHLVIDYVPDGWLVESKSLKLFLHSFRNHGAFHEDCTIDIAKRLVSLLSPKWLRIGAYWYPRGGIPIDVFWQTGSPPEGVWLPDQGVPTYRGRG.

Catalysis depends on cysteine 52, which acts as the Thioimide intermediate. The active-site Proton donor is the aspartate 59. Substrate is bound by residues 74–76 (VES) and 93–94 (HE).

The protein belongs to the GTP cyclohydrolase I family. QueF type 1 subfamily.

It localises to the cytoplasm. The enzyme catalyses 7-aminomethyl-7-carbaguanine + 2 NADP(+) = 7-cyano-7-deazaguanine + 2 NADPH + 3 H(+). It functions in the pathway tRNA modification; tRNA-queuosine biosynthesis. Catalyzes the NADPH-dependent reduction of 7-cyano-7-deazaguanine (preQ0) to 7-aminomethyl-7-deazaguanine (preQ1). The chain is NADPH-dependent 7-cyano-7-deazaguanine reductase from Sinorhizobium medicae (strain WSM419) (Ensifer medicae).